We begin with the raw amino-acid sequence, 404 residues long: Probable tRNA sulfurtransferase (404 aa).

Residues 60–165 (HEVAESLKEI…DEAAYISYEN (106 aa)) form the THUMP domain. ATP contacts are provided by residues 183 to 184 (ML), 208 to 209 (HF), R265, G287, and Q296.

This sequence belongs to the ThiI family.

The protein resides in the cytoplasm. The catalysed reaction is [ThiI sulfur-carrier protein]-S-sulfanyl-L-cysteine + a uridine in tRNA + 2 reduced [2Fe-2S]-[ferredoxin] + ATP + H(+) = [ThiI sulfur-carrier protein]-L-cysteine + a 4-thiouridine in tRNA + 2 oxidized [2Fe-2S]-[ferredoxin] + AMP + diphosphate. It carries out the reaction [ThiS sulfur-carrier protein]-C-terminal Gly-Gly-AMP + S-sulfanyl-L-cysteinyl-[cysteine desulfurase] + AH2 = [ThiS sulfur-carrier protein]-C-terminal-Gly-aminoethanethioate + L-cysteinyl-[cysteine desulfurase] + A + AMP + 2 H(+). The protein operates within cofactor biosynthesis; thiamine diphosphate biosynthesis. In terms of biological role, catalyzes the ATP-dependent transfer of a sulfur to tRNA to produce 4-thiouridine in position 8 of tRNAs, which functions as a near-UV photosensor. Also catalyzes the transfer of sulfur to the sulfur carrier protein ThiS, forming ThiS-thiocarboxylate. This is a step in the synthesis of thiazole, in the thiamine biosynthesis pathway. The sulfur is donated as persulfide by IscS. The chain is Probable tRNA sulfurtransferase from Streptococcus agalactiae serotype Ia (strain ATCC 27591 / A909 / CDC SS700).